The chain runs to 959 residues: Leucine--tRNA ligase (959 aa).

The short motif at 39-49 (PYVNAYPHLGS) is the 'HIGH' region element. Residues 637-641 (KMSKS) carry the 'KMSKS' region motif. K640 lines the ATP pocket. Residues 933 to 959 (TEEDGGSPRRANALPGRPALYAEKRGG) form a disordered region.

Belongs to the class-I aminoacyl-tRNA synthetase family.

It localises to the cytoplasm. The enzyme catalyses tRNA(Leu) + L-leucine + ATP = L-leucyl-tRNA(Leu) + AMP + diphosphate. This Aeropyrum pernix (strain ATCC 700893 / DSM 11879 / JCM 9820 / NBRC 100138 / K1) protein is Leucine--tRNA ligase.